The primary structure comprises 274 residues: Large ribosomal subunit protein uL2c (274 aa).

Disordered regions lie at residues 1-22 (MAIH…DNQV) and 225-274 (PVDH…RRSK).

This sequence belongs to the universal ribosomal protein uL2 family. In terms of assembly, part of the 50S ribosomal subunit.

The protein localises to the plastid. The protein resides in the chloroplast. The sequence is that of Large ribosomal subunit protein uL2c (rpl2) from Silene latifolia (White campion).